The sequence spans 414 residues: Putative competence-damage inducible protein (414 aa).

The protein belongs to the CinA family.

The sequence is that of Putative competence-damage inducible protein from Geobacillus kaustophilus (strain HTA426).